The chain runs to 457 residues: DDB1- and CUL4-associated factor 10 (457 aa).

WD repeat units follow at residues 65 to 104, 108 to 146, 150 to 189, and 195 to 234; these read RTHGAVFNLEYSPDGSVLTLACEQTEVLLFDPLSSKHIKT, AHEDCVNNIRFLDNRMFATCSDDTTIALWDLRKLNSKAC, GHTSWVKNIEYDKNTRLLVTSGFDGNVIIWDTNRCTEDGC, and FHTRFLMRMRLTPDCSKMLISTSSGYLLILHELDLTKSLE. Residues 246 to 265 show a composition bias toward low complexity; sequence TASTSDMTSTSSETRPSSSP. A disordered region spans residues 246-304; the sequence is TASTSDMTSTSSETRPSSSPCHNSDSGPLFEKHMSRSSQREGTSPRNSLEVLTPEVPGE. Positions 281–292 are enriched in polar residues; sequence RSSQREGTSPRN. WD repeat units follow at residues 306–346, 368–406, and 424–457; these read DRGN…QEGT, VGRGYIKELCFSPDGRMIASPHGYGIRLLGFDSQCKELV, and SHKDVVLTTKFSPTHCQIASGCLSGRVSLYQPKF.

This sequence belongs to the WD repeat DCAF10 family.

It functions in the pathway protein modification; protein ubiquitination. May function as a substrate receptor for CUL4-DDB1 E3 ubiquitin-protein ligase complex. This is DDB1- and CUL4-associated factor 10 (dcaf10) from Xenopus laevis (African clawed frog).